A 641-amino-acid chain; its full sequence is MLEQIRGPADLQHLSTHQLRELAAEIREFLIHKVAATGGHLGPNLGVVELTLALHRVFDSPHDPIIFDTGHQAYVHKMLTGRAHEFESLRKKGGLSGYPSRSESEHDWVESSHASAALSYADGLAKAFELSGHRNRHVVAVVGDGALTGGMCWEALNNIAASGRPVIIVVNDNGRSYAPTIGGVADHLATLRLQPAYEQALQRGRDALRALPLVGKFAYRVMHSVKAGIKDSLSPQLLFTDLGLKYVGPVDGHDERAVEAALRHARGFGRPVIVHVVTRKGMGYAPAEDDEADQMHSCGVIDPVTGQATKVAGPGWTATFSDALIGYARKRRDIVAITAAMPGPTGLTPFGQQFPDRLFDVGIAEQHAMTSAAGLAMGGMHPVVAIYSTFLNRAFDQIMMDVALHRLPVTMVLDRAGITGSDGASHNGMWDLSILGVVPGMRVAAPRDAARLREELGEALDVDDGPTALRFPKGDVGEDIPAIERRGSGLSGVDVLALPASGCNHDVLLIGVGAFAPMALAVARRLADQGIGVTVVDPRWVLPVSDSILELAARHKLVVTCEDNGVNGGVGSAVSAALRRAELDVPCRDVGLPQRFYEHASRGELLADLALTDQDIARRITGWVAALGSGVAEAEIREHLD.

Thiamine diphosphate contacts are provided by residues His71 and 112-114 (SHA). Asp144 contacts Mg(2+). Residues 145-146 (GA), Asn173, Tyr284, and Glu365 each bind thiamine diphosphate. Asn173 lines the Mg(2+) pocket.

It belongs to the transketolase family. DXPS subfamily. As to quaternary structure, homodimer. The cofactor is Mg(2+). Thiamine diphosphate is required as a cofactor.

The catalysed reaction is D-glyceraldehyde 3-phosphate + pyruvate + H(+) = 1-deoxy-D-xylulose 5-phosphate + CO2. The protein operates within metabolic intermediate biosynthesis; 1-deoxy-D-xylulose 5-phosphate biosynthesis; 1-deoxy-D-xylulose 5-phosphate from D-glyceraldehyde 3-phosphate and pyruvate: step 1/1. Functionally, catalyzes the acyloin condensation reaction between C atoms 2 and 3 of pyruvate and glyceraldehyde 3-phosphate to yield 1-deoxy-D-xylulose-5-phosphate (DXP). The chain is 1-deoxy-D-xylulose-5-phosphate synthase from Mycolicibacterium paratuberculosis (strain ATCC BAA-968 / K-10) (Mycobacterium paratuberculosis).